Reading from the N-terminus, the 102-residue chain is Small ribosomal subunit protein uS10 (102 aa).

It belongs to the universal ribosomal protein uS10 family. As to quaternary structure, part of the 30S ribosomal subunit.

Involved in the binding of tRNA to the ribosomes. This Oenococcus oeni (strain ATCC BAA-331 / PSU-1) protein is Small ribosomal subunit protein uS10.